The following is a 196-amino-acid chain: Ankyrin repeat domain-containing protein 66 (196 aa).

3 ANK repeats span residues 7 to 37, 43 to 72, and 76 to 105; these read SDMT…DPNY, NDRT…RPCL, and VGWT…AIDA. Residues 152–196 form a disordered region; the sequence is ERDEDWDAKKRELELSLPSLNQNMNKKNKKSRGPTRPSNTKGRRV. Over residues 187 to 196 the composition is skewed to polar residues; the sequence is RPSNTKGRRV.

The protein is Ankyrin repeat domain-containing protein 66 (ANKRD66) of Homo sapiens (Human).